A 659-amino-acid chain; its full sequence is Mitochondrial Rho GTPase 1 (659 aa).

Over 1 to 631 the chain is Cytoplasmic; sequence MTKTRIRIVV…LTNDIDYRQT (631 aa). Residues 3-183 form the Miro 1 domain; sequence KTRIRIVVCG…FYLCQRTITN (181 aa). GTP is bound by residues 12 to 19, 61 to 63, and 115 to 118; these read GDSGVGKT, DTG, and NKCD. 2 consecutive EF-hand domains span residues 199–234 and 328–363; these read LGVL…CFSK and LGYR…TPGL. Ca(2+) contacts are provided by Asp212, Asp214, Asp216, Glu223, Asp341, Asp343, Asp345, and Glu352. The Miro 2 domain maps to 444–609; sequence RKVLNCYMLG…FIKLTEVALE (166 aa). Residues 453 to 460, 489 to 493, and 558 to 561 contribute to the GTP site; these read GKGNSGKS, ELKGG, and LKAD. Residues 632–652 traverse the membrane as a helical; Anchor for type IV membrane protein segment; that stretch reads IVAISSVVGFASLFTFTALKI. Residues 653–659 lie on the Mitochondrial intermembrane side of the membrane; it reads YSSFKNT.

It belongs to the mitochondrial Rho GTPase family.

It is found in the mitochondrion outer membrane. Mitochondrial GTPase involved in mitochondrial trafficking. Probably involved in control of anterograde transport of mitochondria and their subcellular distribution. The sequence is that of Mitochondrial Rho GTPase 1 (GEM1) from Kluyveromyces lactis (strain ATCC 8585 / CBS 2359 / DSM 70799 / NBRC 1267 / NRRL Y-1140 / WM37) (Yeast).